A 115-amino-acid polypeptide reads, in one-letter code: Na(+)/H(+) antiporter subunit C1 (115 aa).

3 consecutive transmembrane segments (helical) span residues 1–21, 28–48, and 72–92; these read MEIL…YLIL, IIIG…TMGG, and LILT…VLAF.

Belongs to the CPA3 antiporters (TC 2.A.63) subunit C family. In terms of assembly, may form a heterooligomeric complex that consists of seven subunits: mnhA1, mnhB1, mnhC1, mnhD1, mnhE1, mnhF1 and mnhG1.

The protein resides in the cell membrane. Mnh complex is a Na(+)/H(+) antiporter involved in Na(+) excretion. This is Na(+)/H(+) antiporter subunit C1 (mnhC1) from Staphylococcus saprophyticus subsp. saprophyticus (strain ATCC 15305 / DSM 20229 / NCIMB 8711 / NCTC 7292 / S-41).